Reading from the N-terminus, the 186-residue chain is Ribosome-recycling factor (186 aa).

It belongs to the RRF family.

It is found in the cytoplasm. Responsible for the release of ribosomes from messenger RNA at the termination of protein biosynthesis. May increase the efficiency of translation by recycling ribosomes from one round of translation to another. The protein is Ribosome-recycling factor of Leifsonia xyli subsp. xyli (strain CTCB07).